A 210-amino-acid polypeptide reads, in one-letter code: Redox-sensing transcriptional repressor Rex (210 aa).

The segment at residues 17-56 is a DNA-binding region (H-T-H motif); that stretch reads KYHRYLGDLLDRDIQRISSKELSDIIGFTASQIRQDLNNF. An NAD(+)-binding site is contributed by 91-96; sequence GAGNLG.

It belongs to the transcriptional regulatory Rex family. Homodimer.

The protein resides in the cytoplasm. Modulates transcription in response to changes in cellular NADH/NAD(+) redox state. This Clostridioides difficile (strain 630) (Peptoclostridium difficile) protein is Redox-sensing transcriptional repressor Rex.